Reading from the N-terminus, the 237-residue chain is 2,3-bisphosphoglycerate-dependent phosphoglycerate mutase (237 aa).

Residues 8–15 (RHGQSQWN), 21–22 (TG), arginine 60, 87–90 (ERHY), lysine 98, 114–115 (RR), and 180–181 (GN) each bind substrate. Catalysis depends on histidine 9, which acts as the Tele-phosphohistidine intermediate. Glutamate 87 functions as the Proton donor/acceptor in the catalytic mechanism.

It belongs to the phosphoglycerate mutase family. BPG-dependent PGAM subfamily. Homodimer.

It catalyses the reaction (2R)-2-phosphoglycerate = (2R)-3-phosphoglycerate. It participates in carbohydrate degradation; glycolysis; pyruvate from D-glyceraldehyde 3-phosphate: step 3/5. Its function is as follows. Catalyzes the interconversion of 2-phosphoglycerate and 3-phosphoglycerate. This chain is 2,3-bisphosphoglycerate-dependent phosphoglycerate mutase, found in Caulobacter sp. (strain K31).